The primary structure comprises 342 residues: Ribosomal RNA small subunit methyltransferase C (342 aa).

It belongs to the methyltransferase superfamily. RsmC family. Monomer.

Its subcellular location is the cytoplasm. It catalyses the reaction guanosine(1207) in 16S rRNA + S-adenosyl-L-methionine = N(2)-methylguanosine(1207) in 16S rRNA + S-adenosyl-L-homocysteine + H(+). Its function is as follows. Specifically methylates the guanine in position 1207 of 16S rRNA in the 30S particle. The protein is Ribosomal RNA small subunit methyltransferase C of Salmonella arizonae (strain ATCC BAA-731 / CDC346-86 / RSK2980).